The chain runs to 665 residues: F-box/LRR-repeat protein 3 (665 aa).

Residues 11–60 form the F-box domain; sequence KPFDLLSEELVFIILDLISPNPSDLKSFSLTCKSFYQLESKHRGSLKPLR. LRR repeat units lie at residues 61–81, 82–108, 109–134, 135–159, 160–185, 186–211, 214–235, 236–261, 262–287, 288–312, 313–338, 339–364, 365–390, 391–416, 419–440, 441–466, 467–492, 493–517, 518–543, 544–569, and 594–619; these read SDYL…DLTF, CPRV…DLSR, SGSF…DLSN, ATEM…KLGR, CKML…SLKW, CVGV…DLSY, ITGK…LLEG, CFGV…DASS, CQNL…DLSH, CSSV…IRLD, GCSV…SLSK, CVSV…DITC, CRKL…KMES, CSLV…DLTD, IDDE…KLGI, CLNI…DLYR, SVGI…NISY, CQDI…ESRG, CPNI…DLKK, CPSI…NVSD, and SSGL…KLHA.

In Arabidopsis thaliana (Mouse-ear cress), this protein is F-box/LRR-repeat protein 3 (FBL3).